Reading from the N-terminus, the 372-residue chain is Tryptophan--tRNA ligase (372 aa).

The 'HIGH' region signature appears at 79 to 87 (PSGKFHFGH). The interval 247–268 (KLQPGLDGRKMSSSRPDSTIFL) is disordered. Residues 256–260 (KMSSS) carry the 'KMSKS' region motif. A compositionally biased stretch (polar residues) spans 257–267 (MSSSRPDSTIF).

Belongs to the class-I aminoacyl-tRNA synthetase family.

The protein resides in the cytoplasm. It catalyses the reaction tRNA(Trp) + L-tryptophan + ATP = L-tryptophyl-tRNA(Trp) + AMP + diphosphate + H(+). The chain is Tryptophan--tRNA ligase from Aeropyrum pernix (strain ATCC 700893 / DSM 11879 / JCM 9820 / NBRC 100138 / K1).